We begin with the raw amino-acid sequence, 530 residues long: Dual specificity calcium/calmodulin-dependent 3',5'-cyclic nucleotide phosphodiesterase 1A (530 aa).

Calmodulin-binding stretches follow at residues 24 to 44 and 114 to 137; these read TEKM…QLEK and EKPR…MYRK. In terms of domain architecture, PDEase spans 142-508; that stretch reads VGLAYPEAVI…ERWKELAAQG (367 aa). His219 acts as the Proton donor in catalysis. Residues His223, His259, Asp260, and Asp366 each contribute to the Zn(2+) site. Asp260 is a binding site for Mg(2+). Disordered stretches follow at residues 450 to 471 and 502 to 530; these read TKTP…NDGT and KELA…ETHS. Residues 451–471 show a composition bias toward polar residues; that stretch reads KTPSYGASRRSNMKGTTNDGT. The segment covering 510–530 has biased composition (basic and acidic residues); that stretch reads PDPHKNSDLVNAEEKHAETHS.

This sequence belongs to the cyclic nucleotide phosphodiesterase family. PDE1 subfamily. In terms of assembly, homodimer. Interacts with YWHAZ. Zn(2+) serves as cofactor. The cofactor is Mg(2+).

The enzyme catalyses a nucleoside 3',5'-cyclic phosphate + H2O = a nucleoside 5'-phosphate + H(+). It carries out the reaction 3',5'-cyclic GMP + H2O = GMP + H(+). The catalysed reaction is 3',5'-cyclic AMP + H2O = AMP + H(+). With respect to regulation, type I PDE are activated by the binding of calmodulin in the presence of Ca(2+). Its function is as follows. Calcium/calmodulin-dependent cyclic nucleotide phosphodiesterase with a dual specificity for the second messengers cGMP and cAMP, which are key regulators of many important physiological processes. Has a higher efficiency with cGMP compared to cAMP. In Bos taurus (Bovine), this protein is Dual specificity calcium/calmodulin-dependent 3',5'-cyclic nucleotide phosphodiesterase 1A.